The following is a 250-amino-acid chain: Prophage antitermination protein Q homolog QuuQ (250 aa).

This sequence belongs to the phage antitermination Q type 2 family.

In terms of biological role, positively regulate expression of some phage genes. Bacterial host RNA polymerase modified by antitermination proteins transcribes through termination sites that otherwise prevent expression of the regulated genes. In Escherichia coli (strain K12), this protein is Prophage antitermination protein Q homolog QuuQ (quuQ).